The primary structure comprises 255 residues: uncharacterized protein (255 aa).

A Microbody targeting signal motif is present at residues 253-255 (SKI).

Belongs to the enoyl-CoA hydratase/isomerase family.

It localises to the peroxisome. This is an uncharacterized protein from Caenorhabditis elegans.